A 420-amino-acid chain; its full sequence is ATP phosphoribosyltransferase regulatory subunit (420 aa).

The protein belongs to the class-II aminoacyl-tRNA synthetase family. HisZ subfamily. In terms of assembly, heteromultimer composed of HisG and HisZ subunits.

The protein resides in the cytoplasm. It functions in the pathway amino-acid biosynthesis; L-histidine biosynthesis; L-histidine from 5-phospho-alpha-D-ribose 1-diphosphate: step 1/9. In terms of biological role, required for the first step of histidine biosynthesis. May allow the feedback regulation of ATP phosphoribosyltransferase activity by histidine. This is ATP phosphoribosyltransferase regulatory subunit from Synechococcus sp. (strain ATCC 27144 / PCC 6301 / SAUG 1402/1) (Anacystis nidulans).